A 350-amino-acid chain; its full sequence is B1 bradykinin receptor (350 aa).

Over 1–41 (MASRAPLELLPLNRSQLSPPNATTCDDAPEAWDLLHRVLPS) the chain is Extracellular. N-linked (GlcNAc...) asparagine glycans are attached at residues Asn-13 and Asn-21. The helical transmembrane segment at 42-62 (VIIIICVCGLLGNLLVLAVLL) threads the bilayer. Residues 63 to 72 (RPRRRLNVAE) are Cytoplasmic-facing. The helical transmembrane segment at 73–93 (MYLANLAASDLVFVLGLPFWA) threads the bilayer. Residues 94–110 (ANISNQFRWPFGGLLCR) are Extracellular-facing. N-linked (GlcNAc...) asparagine glycosylation occurs at Asn-95. A disulfide bridge connects residues Cys-109 and Cys-186. A helical membrane pass occupies residues 111–131 (LVNGVIKANLFISIFLVVAIS). Residues 132–150 (RDRYRALVHPMATRRRRQA) lie on the Cytoplasmic side of the membrane. The helical transmembrane segment at 151-171 (RATCVLIWVAGSLLSVPTFLF) threads the bilayer. The Extracellular segment spans residues 172–204 (RSIEAVPELNNDSACVLLHPPGAWHVARMVELN). An N-linked (GlcNAc...) asparagine glycan is attached at Asn-182. Residues 205–225 (VLGFLLPLAAIVFFNCHILAS) form a helical membrane-spanning segment. Topologically, residues 226-248 (LRGRPEVRGARCGGPPDGRTTAL) are cytoplasmic. The chain crosses the membrane as a helical span at residues 249 to 269 (ILTFVAAFLVCWTPYHFFAFL). Residues 270–292 (EFLTQVQVVRGCFWENFKDLGLQ) lie on the Extracellular side of the membrane. The helical transmembrane segment at 293 to 313 (YASFFAFINSCLNPVIYVFVG) threads the bilayer. Residues 314 to 350 (RLFRTRVWDLFKQCAPRRPPAVSWSHRKRVLQLFWQN) are Cytoplasmic-facing. Cys-327 is lipidated: S-palmitoyl cysteine.

Belongs to the G-protein coupled receptor 1 family. Bradykinin receptor subfamily. BDKRB1 sub-subfamily.

The protein resides in the cell membrane. In terms of biological role, this is a receptor for bradykinin. Could be a factor in chronic pain and inflammation. This chain is B1 bradykinin receptor (BDKRB1), found in Canis lupus familiaris (Dog).